The sequence spans 119 residues: Putative nitrilase-like protein YIL165C (119 aa).

Residues 1–82 form the CN hydrolase domain; the sequence is MKNIAYEGRL…EGLLTAEINT (82 aa). The active-site Proton acceptor is Asp-21.

It belongs to the carbon-nitrogen hydrolase superfamily. Nitrilase family.

The polypeptide is Putative nitrilase-like protein YIL165C (Saccharomyces cerevisiae (strain ATCC 204508 / S288c) (Baker's yeast)).